The chain runs to 665 residues: GRB2-associated-binding protein 2 (665 aa).

The residue at position 2 (S2) is a Phosphoserine. The region spanning 8-119 (DVVCTGWLRK…WVQSICQICG (112 aa)) is the PH domain. Residues 131–183 (RNLSSASHGPRSSPAEFSSSQHLLRERKSSAPSHSSQPTLFTFEPPMTSHMQP) are disordered. Phosphoserine is present on residues S135, S142, S143, S149, S150, S160, S165, S211, S220, and S261. The span at 160-170 (SAPSHSSQPTL) shows a compositional bias: polar residues. Position 262 is a phosphothreonine (T262). Phosphotyrosine is present on Y263. T275 carries the post-translational modification Phosphothreonine. Phosphoserine is present on residues S278 and S282. T284 carries the phosphothreonine modification. Phosphotyrosine is present on Y290. A Phosphothreonine modification is found at T328. 2 disordered regions span residues 340–442 (TSGD…ENYV) and 491–517 (PSRG…PTPL). An SH3-binding motif is present at residues 348–355 (PPPRPPKP). S365 carries the phosphoserine modification. Residues T382 and T388 each carry the phosphothreonine modification. Residue S402 is modified to Phosphoserine. T405 carries the post-translational modification Phosphothreonine. Residues 412-423 (GSGESASWSAES) show a composition bias toward low complexity. 2 positions are modified to phosphoserine: S420 and S423. The residue at position 441 (Y441) is a Phosphotyrosine. Residues 499 to 508 (PPPVNRNLKP) carry the SH3-binding motif. At S532 the chain carries Phosphoserine. 2 stretches are compositionally biased toward polar residues: residues 548 to 566 (SSSQ…STDS) and 578 to 600 (NPVS…STGS). A disordered region spans residues 548–631 (SSSQYCRPIS…SSVTSDEKVD (84 aa)). Phosphoserine is present on S612. At Y632 the chain carries Phosphotyrosine. Residues 646 to 659 (TMQEWTDVRQSSEP) are compositionally biased toward polar residues. Positions 646 to 665 (TMQEWTDVRQSSEPSKGAKL) are disordered.

This sequence belongs to the GAB family. In terms of assembly, part of a complex composed of EEIG1, TNFRSF11A/RANK, PLCG2, GAB2, TEC and BTK; complex formation increases in the presence of TNFSF11/RANKL. Interacts with HCK. Interacts with SHC1; may mediate interaction with receptors. Interacts with SYK. Interacts with PI-3 kinase. Interacts with GRB2 (via SH3 2 domain). Interacts (phosphorylated) with PTPN11. Interacts with TNFRSF11A (via cytoplasmic domain). Interacts (phosphorylated) with 14-3-3 family proteins SFN, YWHAB, YWHAE, YWHAG, YWHAH, YWHAQ and YWHAZ; prevents interaction with GRB2 and attenuates GAB2 signaling. Phosphorylated upon EGF stimulation. Phosphorylated on tyrosine residues by HCK upon IL6 signaling. Phosphorylated on tyrosine residue(s) by the thrombopoietin receptor (TPOR), stem cell factor receptor (SCFR), and T-cell and B-cell antigen receptors, gp130, IL-2R and IL-3R. Phosphorylated upon stimulation of TNFRSF11A/RANK by TNFSF11/RANKL. Post-translationally, dephosphorylated by PTPN11.

It is found in the cytoplasm. The protein localises to the cell membrane. It localises to the membrane raft. Functionally, adapter protein which acts downstream of several membrane receptors including cytokine, antigen, hormone, cell matrix and growth factor receptors to regulate multiple signaling pathways. Regulates osteoclast differentiation mediating the TNFRSF11A/RANK signaling. In allergic response, it plays a role in mast cells activation and degranulation through PI-3-kinase regulation. Also involved in the regulation of cell proliferation and hematopoiesis. The sequence is that of GRB2-associated-binding protein 2 (Gab2) from Rattus norvegicus (Rat).